The chain runs to 119 residues: MPRVKRGVTARARHKKVLALAKGYRGRRKNVYRVAKQAVMKAGQYAYRDRRQRKRQFRQLWIARINAAARECGLSYSKFMNGLKKASIEIDRKVLADLAVFEKAVFAQLVEKAKASLAA.

Belongs to the bacterial ribosomal protein bL20 family.

In terms of biological role, binds directly to 23S ribosomal RNA and is necessary for the in vitro assembly process of the 50S ribosomal subunit. It is not involved in the protein synthesizing functions of that subunit. This is Large ribosomal subunit protein bL20 from Laribacter hongkongensis (strain HLHK9).